The primary structure comprises 140 residues: Small ribosomal subunit protein uS19 (140 aa).

This sequence belongs to the universal ribosomal protein uS19 family.

Functionally, protein S19 forms a complex with S13 that binds strongly to the 16S ribosomal RNA. The protein is Small ribosomal subunit protein uS19 of Natronomonas pharaonis (strain ATCC 35678 / DSM 2160 / CIP 103997 / JCM 8858 / NBRC 14720 / NCIMB 2260 / Gabara) (Halobacterium pharaonis).